The primary structure comprises 834 residues: Semaphorin-4C (834 aa).

Positions 1–20 (MAPHWAVWLLAAGLWGLGIG) are cleaved as a signal peptide. The Extracellular segment spans residues 21–664 (AEMWWNLVPR…EARAPLENLG (644 aa)). The Sema domain maps to 30–497 (RKTVSSGELV…SRSQLVQLSL (468 aa)). Residues 46–489 (SQTGIQDFLT…SKKVLFAGSR (444 aa)) form a dominant negative effect on myogenic differentiation region. An intrachain disulfide couples cysteine 99 to cysteine 110. Residues asparagine 106 and asparagine 121 are each glycosylated (N-linked (GlcNAc...) asparagine). 3 cysteine pairs are disulfide-bonded: cysteine 128/cysteine 137, cysteine 261/cysteine 370, and cysteine 285/cysteine 330. Residues asparagine 310 and asparagine 419 are each glycosylated (N-linked (GlcNAc...) asparagine). A PSI domain is found at 499–552 (DCTKYRFCVDCVLARDPYCAWNVNTSRCVATTSGRSGSFLVQHVANLDTSKMCN). Cystine bridges form between cysteine 500-cysteine 517 and cysteine 509-cysteine 526. 2 N-linked (GlcNAc...) asparagine glycosylation sites follow: asparagine 522 and asparagine 565. The Ig-like C2-type domain maps to 557-645 (KKVRSIPKNI…RLAAESYLVA (89 aa)). Cysteine 578 and cysteine 628 are joined by a disulfide. Residues 665–685 (LVWLAVVALGAVCLVLLLLVL) traverse the membrane as a helical segment. Residues 686 to 834 (SLRRRLREEL…PDSNPEESSV (149 aa)) are Cytoplasmic-facing. Phosphoserine is present on serine 743. Residues 749-834 (GHARCQPGGG…PDSNPEESSV (86 aa)) are disordered. Residues 757 to 773 (GGPPSPPPGIPGQPLPS) show a composition bias toward pro residues. The PDZ-binding motif lies at 831-834 (ESSV).

This sequence belongs to the semaphorin family. As to quaternary structure, interacts (via the PDZ-binding motif) with GIPC (via the PDZ domain). Interacts with NCDN. Interacts (via the PDZ-binding motif) with DLG4. Interacts with PLXNB2. As to expression, predominantly expressed in brain (at protein level).

The protein localises to the postsynaptic density membrane. The protein resides in the cytoplasmic vesicle. It localises to the secretory vesicle. Its subcellular location is the synaptic vesicle membrane. Functionally, cell surface receptor for PLXNB2 that plays an important role in cell-cell signaling. PLXNB2 binding promotes downstream activation of RHOA and phosphorylation of ERBB2 at 'Tyr-1248'. Required for normal brain development, axon guidance and cell migration. Probable signaling receptor which may play a role in myogenic differentiation through activation of the stress-activated MAPK cascade. The polypeptide is Semaphorin-4C (Sema4c) (Mus musculus (Mouse)).